Consider the following 223-residue polypeptide: UPF0502 protein Sde_2426 (223 aa).

This sequence belongs to the UPF0502 family.

This is UPF0502 protein Sde_2426 from Saccharophagus degradans (strain 2-40 / ATCC 43961 / DSM 17024).